We begin with the raw amino-acid sequence, 525 residues long: Chromosomal replication initiator protein DnaA (525 aa).

Residues 1–71 (MNDFWQHCSA…SDLARDFWNA (71 aa)) form a domain I, interacts with DnaA modulators region. Residues 71 to 188 (APIEVQFVLD…GEADSMYERS (118 aa)) form a domain II region. The segment at 160-182 (AAAGRRTWRPGPGAAPANGGEAD) is disordered. The span at 169–181 (PGPGAAPANGGEA) shows a compositional bias: low complexity. The domain III, AAA+ region stretch occupies residues 189-405 (KLNPVLTFDN…GALRKILAYS (217 aa)). Residues G233, G235, K236, and T237 each contribute to the ATP site. Positions 406–525 (KFHGREISIE…LHVLEQTLKG (120 aa)) are domain IV, binds dsDNA.

It belongs to the DnaA family. As to quaternary structure, oligomerizes as a right-handed, spiral filament on DNA at oriC.

The protein resides in the cytoplasm. Functionally, plays an essential role in the initiation and regulation of chromosomal replication. ATP-DnaA binds to the origin of replication (oriC) to initiate formation of the DNA replication initiation complex once per cell cycle. Binds the DnaA box (a 9 base pair repeat at the origin) and separates the double-stranded (ds)DNA. Forms a right-handed helical filament on oriC DNA; dsDNA binds to the exterior of the filament while single-stranded (ss)DNA is stabiized in the filament's interior. The ATP-DnaA-oriC complex binds and stabilizes one strand of the AT-rich DNA unwinding element (DUE), permitting loading of DNA polymerase. After initiation quickly degrades to an ADP-DnaA complex that is not apt for DNA replication. Binds acidic phospholipids. In Burkholderia ambifaria (strain ATCC BAA-244 / DSM 16087 / CCUG 44356 / LMG 19182 / AMMD) (Burkholderia cepacia (strain AMMD)), this protein is Chromosomal replication initiator protein DnaA.